Reading from the N-terminus, the 276-residue chain is Nickel import system permease protein NikC (276 aa).

A run of 5 helical transmembrane segments spans residues 10–30 (LIFF…FFVS), 73–93 (LFVT…LGLF), 108–128 (FIDV…ASFF), 186–206 (IIPA…LYIS), and 238–258 (IMLI…NLTG). Residues 69–258 (ARSTLFVTVL…ITILIFNLTG (190 aa)) form the ABC transmembrane type-1 domain.

This sequence belongs to the binding-protein-dependent transport system permease family. OppBC subfamily. The complex is composed of two ATP-binding proteins (NikD and NikE), two transmembrane proteins (NikB and NikC) and a solute-binding protein (NikA).

The protein resides in the cell membrane. Its function is as follows. Part of the ABC transporter complex NikABCDE (Opp2) involved in nickel import. Probably responsible for the translocation of the substrate across the membrane. This is Nickel import system permease protein NikC from Staphylococcus aureus (strain Mu50 / ATCC 700699).